The sequence spans 214 residues: Adenylate kinase (214 aa).

10-15 is an ATP binding site; sequence GVGKGT. The interval 30 to 59 is NMP; sequence STGDILRAAVKELTPMGAKAKGYMDSGALV. AMP-binding positions include Thr-31, Arg-36, 57 to 59, 85 to 88, and Gln-92; these read ALV and GFPR. The interval 126–163 is LID; the sequence is GRRACANCGAGYHVDFAPSKVAGVCDACSGQLVQREDD. Residue Arg-127 coordinates ATP. The Zn(2+) site is built by Cys-130, Cys-133, Cys-150, and Cys-153. Residues Arg-160 and Arg-171 each coordinate AMP. Gly-199 serves as a coordination point for ATP.

This sequence belongs to the adenylate kinase family. As to quaternary structure, monomer.

It is found in the cytoplasm. The enzyme catalyses AMP + ATP = 2 ADP. Its pathway is purine metabolism; AMP biosynthesis via salvage pathway; AMP from ADP: step 1/1. In terms of biological role, catalyzes the reversible transfer of the terminal phosphate group between ATP and AMP. Plays an important role in cellular energy homeostasis and in adenine nucleotide metabolism. The chain is Adenylate kinase from Geobacter sp. (strain M21).